A 144-amino-acid chain; its full sequence is MKNLKSNDVLLHTLTRVVTFIILAFSVYLFFAGHNNPGGGFIGGLMTASALLLMYLGFDMRSIKKAIPFDFTKMIAFGLLIAIFTGFGGLLVGDPYLTQYFEYYQIPILGETELTTALPFDLGIYLVVIGIALTIILTIAEDDM.

Helical transmembrane passes span Val-9 to Phe-31, Phe-41 to Phe-58, Ile-75 to Leu-97, and Ala-117 to Ile-139.

It belongs to the CPA3 antiporters (TC 2.A.63) subunit B family. As to quaternary structure, forms a heterooligomeric complex that consists of seven subunits: MrpA, MrpB, MrpC, MrpD, MrpE, MrpF and MrpG.

Its subcellular location is the cell membrane. Mnh complex is a Na(+)Li(+)/H(+) antiporter involved in Na(+) and/or Li(+) excretion and Na(+) resistance. Na(+)/H(+) antiport consumes a transmembrane electrical potential, and is thus inferred to be electrogenic. Does not transport K(+), Ca(2+) or Mg(2+). The polypeptide is Na(+)/H(+) antiporter subunit B (mrpB) (Alkalihalophilus pseudofirmus (strain ATCC BAA-2126 / JCM 17055 / OF4) (Bacillus pseudofirmus)).